The following is a 228-amino-acid chain: HTH-type transcriptional repressor RspR (228 aa).

The 68-residue stretch at 11 to 78 (QPVNQQIYRI…PQRGSYVNKI (68 aa)) folds into the HTH gntR-type domain. The H-T-H motif DNA-binding region spans 38–57 (EKEVSVRFNVSRQPVREAFI).

Repressor of the rspAB operon. Acts by binding directly to the upstream region of rspA. In Escherichia coli (strain K12), this protein is HTH-type transcriptional repressor RspR (rspR).